Reading from the N-terminus, the 184-residue chain is ADP-ribosylation factor-like protein 2 (184 aa).

Gly2 carries N-myristoyl glycine lipidation. GTP contacts are provided by residues 23–30, 66–70, Gly68, and 125–128; these read GLDNAGKT, DVGGQ, and NKSD.

Belongs to the small GTPase superfamily. Arf family.

It localises to the cytoplasm. The protein localises to the cell membrane. The protein resides in the cytoskeleton. Its subcellular location is the microtubule organizing center. It is found in the centrosome. Its function is as follows. GTP-binding protein that functions in embryogenesis, cytokinesis, germline development and microtubulule cytoskeleton dynamics. The chain is ADP-ribosylation factor-like protein 2 (evl-20.1) from Caenorhabditis briggsae.